Here is a 105-residue protein sequence, read N- to C-terminus: Cell division protein FtsB (105 aa).

At 1 to 3 the chain is on the cytoplasmic side; that stretch reads MGK. A helical membrane pass occupies residues 4–21; it reads LTLLLLALLVWLQYSLWF. Residues 22–105 lie on the Periplasmic side of the membrane; it reads GKNGLHDYTR…QASGQQQNNR (84 aa). Positions 33 to 62 form a coiled coil; the sequence is NDDVTAQQATNAKLKARNDQLFAEIDDLNG.

Belongs to the FtsB family. As to quaternary structure, part of a complex composed of FtsB, FtsL and FtsQ.

Its subcellular location is the cell inner membrane. In terms of biological role, essential cell division protein. May link together the upstream cell division proteins, which are predominantly cytoplasmic, with the downstream cell division proteins, which are predominantly periplasmic. This chain is Cell division protein FtsB, found in Klebsiella aerogenes (Enterobacter aerogenes).